Here is a 395-residue protein sequence, read N- to C-terminus: Acetylornithine aminotransferase (395 aa).

Residues 117 to 118 (GA) and Phe-144 each bind pyridoxal 5'-phosphate. Arg-147 is a binding site for N(2)-acetyl-L-ornithine. 230 to 233 (DEVQ) contacts pyridoxal 5'-phosphate. The residue at position 259 (Lys-259) is an N6-(pyridoxal phosphate)lysine. Residue Ser-285 participates in N(2)-acetyl-L-ornithine binding. Thr-286 contributes to the pyridoxal 5'-phosphate binding site.

This sequence belongs to the class-III pyridoxal-phosphate-dependent aminotransferase family. ArgD subfamily. In terms of assembly, homodimer. Pyridoxal 5'-phosphate is required as a cofactor.

The protein resides in the cytoplasm. It carries out the reaction N(2)-acetyl-L-ornithine + 2-oxoglutarate = N-acetyl-L-glutamate 5-semialdehyde + L-glutamate. It functions in the pathway amino-acid biosynthesis; L-arginine biosynthesis; N(2)-acetyl-L-ornithine from L-glutamate: step 4/4. This chain is Acetylornithine aminotransferase, found in Methanosarcina mazei (strain ATCC BAA-159 / DSM 3647 / Goe1 / Go1 / JCM 11833 / OCM 88) (Methanosarcina frisia).